The chain runs to 222 residues: Octanoyltransferase (222 aa).

In terms of domain architecture, BPL/LPL catalytic spans 35-210 (ETTPDELWLV…EFVHLLGYPK (176 aa)). Residues 74-81 (RGGQVTYH), 141-143 (SLG), and 154-156 (GLA) each bind substrate. Cysteine 172 acts as the Acyl-thioester intermediate in catalysis.

The protein belongs to the LipB family.

The protein localises to the cytoplasm. The enzyme catalyses octanoyl-[ACP] + L-lysyl-[protein] = N(6)-octanoyl-L-lysyl-[protein] + holo-[ACP] + H(+). Its pathway is protein modification; protein lipoylation via endogenous pathway; protein N(6)-(lipoyl)lysine from octanoyl-[acyl-carrier-protein]: step 1/2. In terms of biological role, catalyzes the transfer of endogenously produced octanoic acid from octanoyl-acyl-carrier-protein onto the lipoyl domains of lipoate-dependent enzymes. Lipoyl-ACP can also act as a substrate although octanoyl-ACP is likely to be the physiological substrate. The chain is Octanoyltransferase from Serratia proteamaculans (strain 568).